A 1997-amino-acid chain; its full sequence is Otoferlin (1997 aa).

The C2 1 domain maps to 1–98; sequence MALIVHLKTV…VEENRVEVTD (98 aa). The Cytoplasmic segment spans residues 1 to 1963; the sequence is MALIVHLKTV…ARYFLWHTYR (1963 aa). Residues 140–167 are disordered; the sequence is QEEKDSQETDGLLPGSRPSTRISGEKSF. 2 consecutive C2 domains span residues 235 to 356 and 399 to 530; these read KRSK…HKWA and IEGN…FLPT. The interval 643 to 692 is disordered; that stretch reads VDGMSRPLRPRPRKEPGDEEEVDLIQNSSDDEGDEAGDLASVSSTPPMRP. A compositionally biased stretch (acidic residues) spans 659 to 679; that stretch reads GDEEEVDLIQNSSDDEGDEAG. The stretch at 791–820 forms a coiled coil; it reads RERLKSCMRELESMGQQAKSLRAQVKRHTV. C2 domains follow at residues 943-1068 and 1115-1241; these read LHSF…PPRF and RGPI…PNWN. Residues Asp-975, Asp-981, Asp-1037, Asp-1039, and Asp-1045 each contribute to the Ca(2+) site. 3 disordered regions span residues 1253–1272, 1296–1326, and 1343–1402; these read LRNGGPSSRPTGEVVVSMEP, DVAEDEKERKKKKKKGPSEEPEEEEPDESML, and LRQH…EKKK. Composition is skewed to acidic residues over residues 1314 to 1325 and 1352 to 1361; these read EEPEEEEPDESM and DLEEKEEMES. A compositionally biased stretch (basic and acidic residues) spans 1370–1383; it reads KSKEKSRAAKEEKK. 2 C2 domains span residues 1464–1593 and 1714–1865; these read LPED…ATCG and DMPA…KQCT. Ca(2+) contacts are provided by Asp-1508, Asp-1514, Asp-1563, Asp-1565, Asp-1571, Asp-1836, Ser-1839, and Asp-1842. Residues 1964–1984 form a helical membrane-spanning segment; the sequence is WLLLKFLLLFLLLLLFALFLY. Residues 1985–1997 lie on the Extracellular side of the membrane; the sequence is SLPGYLAKKILGA.

Belongs to the ferlin family. Interacts with SNAP25; the interaction is direct. Interacts with STX1; the interaction is direct. Interacts with RAB8B. Ca(2+) is required as a cofactor. In terms of tissue distribution, isoform 1 is expressed in cochlea and brain. Expressed in the cochlear and vestibular hair cells. Expressed in both inner and outer hair cells (IHCs and OHCs) and cochlear ganglions neurons at postnatal day 2 (P2) and 6 (P6). Expressed only in IHCs at postnatal day 60 (P60) (at protein level). Strongly expressed in brain and inner ear. In the inner ear, it is mainly expressed in the cochlear IHC and vestibular type I sensory hair cells. Weakly expressed in eye, heart, skeletal muscle, liver, kidney, lung and testis.

Its subcellular location is the cytoplasmic vesicle. It localises to the secretory vesicle. The protein localises to the synaptic vesicle membrane. The protein resides in the basolateral cell membrane. It is found in the endoplasmic reticulum membrane. Its subcellular location is the golgi apparatus membrane. It localises to the presynaptic cell membrane. The protein localises to the cell membrane. Key calcium ion sensor involved in the Ca(2+)-triggered synaptic vesicle-plasma membrane fusion and in the control of neurotransmitter release at these output synapses. Interacts in a calcium-dependent manner to the presynaptic SNARE proteins at ribbon synapses of cochlear inner hair cells (IHCs) to trigger exocytosis of neurotransmitter. Also essential to synaptic exocytosis in immature outer hair cells (OHCs). May also play a role within the recycling of endosomes. The chain is Otoferlin (Otof) from Mus musculus (Mouse).